We begin with the raw amino-acid sequence, 275 residues long: tRNA pseudouridine synthase B (275 aa).

The Nucleophile role is filled by aspartate 38.

This sequence belongs to the pseudouridine synthase TruB family. Type 1 subfamily.

It catalyses the reaction uridine(55) in tRNA = pseudouridine(55) in tRNA. Its function is as follows. Responsible for synthesis of pseudouridine from uracil-55 in the psi GC loop of transfer RNAs. This Nitratiruptor sp. (strain SB155-2) protein is tRNA pseudouridine synthase B.